The primary structure comprises 258 residues: MGISGKLGDIASKVYEDVLMEEVKKYPRPRHVGIITDGNRRYARIVGIPENEGHVKGKNKVEEVLDWCMELDIKIVTFYAFSTENFKRSPEEVDFLFHLINDAFISLLKDERVYKNKINVKVIGNVSMLPEYLRETIKITEETTKNFSNYHMNLAIGYGGREEILDAIKRIARDAIAGKINVDEIDESKFRNYLYDGNLPDPDLILRTSGEERISNFLLWQSAYSELYFSDVYWPEFSKLDFLRAIYSYQRRQRRFGR.

Aspartate 37 is an active-site residue. Aspartate 37 is a binding site for Mg(2+). Residues 38–41 (GNRR), histidine 54, and 82–84 (STE) contribute to the substrate site. The active-site Proton acceptor is asparagine 85. Substrate is bound by residues phenylalanine 86, arginine 88, arginine 207, and 213 to 215 (RIS). Glutamate 226 provides a ligand contact to Mg(2+).

The protein belongs to the UPP synthase family. In terms of assembly, homodimer. Requires Mg(2+) as cofactor.

The catalysed reaction is geranylgeranyl diphosphate + 7 isopentenyl diphosphate = tri-trans,hepta-cis-undecaprenyl diphosphate + 7 diphosphate. Its function is as follows. Catalyzes the sequential condensation of isopentenyl diphosphate (IPP) with geranylgeranyl diphosphate (GGPP) to yield (2Z,6Z,10Z,14Z,18Z,22Z,26Z,30E,34E,38E)-undecaprenyl diphosphate (tritrans,heptacis-UPP). It is probably the precursor of glycosyl carrier lipids. The polypeptide is Tritrans,polycis-undecaprenyl-diphosphate synthase (geranylgeranyl-diphosphate specific) (Thermoplasma volcanium (strain ATCC 51530 / DSM 4299 / JCM 9571 / NBRC 15438 / GSS1)).